The chain runs to 376 residues: Lipoyl synthase 1, chloroplastic (376 aa).

The span at 1-13 (MIEQSLSKPSFSL) shows a compositional bias: polar residues. Disordered regions lie at residues 1 to 25 (MIEQ…KSKS) and 47 to 75 (IDAK…DPNV). Residues 1–35 (MIEQSLSKPSFSLSIPIPQPPKSKSSFLCSYSKIR) constitute a chloroplast transit peptide. Residues Cys-107, Cys-112, Cys-118, Cys-138, Cys-142, Cys-145, and Ser-353 each contribute to the [4Fe-4S] cluster site. The 222-residue stretch at 121-342 (GGGDGIATAT…KEYGESIGFR (222 aa)) folds into the Radical SAM core domain.

This sequence belongs to the radical SAM superfamily. Lipoyl synthase family. [4Fe-4S] cluster is required as a cofactor.

It localises to the plastid. Its subcellular location is the chloroplast. It carries out the reaction [[Fe-S] cluster scaffold protein carrying a second [4Fe-4S](2+) cluster] + N(6)-octanoyl-L-lysyl-[protein] + 2 oxidized [2Fe-2S]-[ferredoxin] + 2 S-adenosyl-L-methionine + 4 H(+) = [[Fe-S] cluster scaffold protein] + N(6)-[(R)-dihydrolipoyl]-L-lysyl-[protein] + 4 Fe(3+) + 2 hydrogen sulfide + 2 5'-deoxyadenosine + 2 L-methionine + 2 reduced [2Fe-2S]-[ferredoxin]. Its pathway is protein modification; protein lipoylation via endogenous pathway; protein N(6)-(lipoyl)lysine from octanoyl-[acyl-carrier-protein]: step 2/2. Functionally, catalyzes the radical-mediated insertion of two sulfur atoms into the C-6 and C-8 positions of the octanoyl moiety bound to the lipoyl domains of lipoate-dependent enzymes, thereby converting the octanoylated domains into lipoylated derivatives. The polypeptide is Lipoyl synthase 1, chloroplastic (Populus trichocarpa (Western balsam poplar)).